Here is a 117-residue protein sequence, read N- to C-terminus: UPF0102 protein YPN_3432 (117 aa).

Belongs to the UPF0102 family.

In Yersinia pestis bv. Antiqua (strain Nepal516), this protein is UPF0102 protein YPN_3432.